The sequence spans 897 residues: Leucine--tRNA ligase (897 aa).

Residues 49-59 carry the 'HIGH' region motif; the sequence is PYPSGKLHMGH. Positions 654 to 658 match the 'KMSKS' region motif; sequence KMSKS. An ATP-binding site is contributed by K657.

Belongs to the class-I aminoacyl-tRNA synthetase family.

It is found in the cytoplasm. The enzyme catalyses tRNA(Leu) + L-leucine + ATP = L-leucyl-tRNA(Leu) + AMP + diphosphate. This is Leucine--tRNA ligase from Methylibium petroleiphilum (strain ATCC BAA-1232 / LMG 22953 / PM1).